Here is a 478-residue protein sequence, read N- to C-terminus: RNA-binding protein 42 (478 aa).

Residues 1–20 (MASAMAGAGPAPGLPVAGGP) are compositionally biased toward low complexity. The interval 1 to 33 (MASAMAGAGPAPGLPVAGGPVVPGPGVGIPGKS) is disordered. Alanine 2 carries the N-acetylalanine modification. Serine 133 is subject to Phosphoserine. Asymmetric dimethylarginine occurs at positions 151, 156, 166, and 179. Disordered regions lie at residues 171–207 (LSSA…MLPP) and 317–354 (SLRP…PEKL). Pro residues predominate over residues 193–205 (PPLPGPPGPPMML). Residues 234–478 (ELGLGLGLGL…QKEKKKLGLR (245 aa)) form a necessary for interaction with HNRNPK region. Basic and acidic residues predominate over residues 343 to 354 (GEDKKKGKPEKL). Residues 379–457 (FRIFCGDLGN…RPIKLRKSMW (79 aa)) enclose the RRM domain.

This sequence belongs to the RRM RBM42 family. Interacts with HNRNPK. Expressed in cell lines (at protein level). Expressed in heart, brain, spleen, lung, liver, skeletal muscle, kidney and testis.

It is found in the nucleus. The protein localises to the cytoplasm. In terms of biological role, binds (via the RRM domain) to the 3'-untranslated region (UTR) of CDKN1A mRNA. The polypeptide is RNA-binding protein 42 (Rbm42) (Mus musculus (Mouse)).